The sequence spans 224 residues: Oxalate oxidase 2 (224 aa).

Positions 1–23 are cleaved as a signal peptide; the sequence is MGYSKTLAVSLFAVLLLAPAVLA. Cysteine 33 and cysteine 49 are oxidised to a cystine. In terms of domain architecture, Cupin type-1 spans 63 to 214; the sequence is SKLAKAGNTS…ALRVEAGVVE (152 aa). Residues asparagine 70 and asparagine 75 are each glycosylated (N-linked (GlcNAc...) asparagine). Mn(2+) contacts are provided by histidine 111, histidine 113, glutamate 118, and histidine 160.

This sequence belongs to the germin family. In terms of assembly, oligomer (believed to be a pentamer but probably hexamer). Post-translationally, glycosylated. A form called G contains antennary GlcNAc residues, whereas a form called G' lacks antennary GlcNAc residues in its otherwise identical glycans. In terms of tissue distribution, root.

It localises to the secreted. The protein resides in the extracellular space. It is found in the apoplast. Its subcellular location is the cell wall. The catalysed reaction is oxalate + O2 + 2 H(+) = H2O2 + 2 CO2. In terms of biological role, releases hydrogen peroxide in the apoplast. May play an important role in several aspects of plant growth and defense mechanisms. The protein is Oxalate oxidase 2 of Hordeum vulgare (Barley).